The following is a 98-amino-acid chain: Hainantoxin-XVII (98 aa).

A signal peptide spans 1-40; that stretch reads MTTVGVSLFRRSPEKITMKIATFLGLSFLLIASYVLICEA. Residues 41 to 64 constitute a propeptide that is removed on maturation; the sequence is QHPGFQELLILEENMRDPENSKER. Disulfide bonds link C66–C81, C73–C85, and C80–C95.

It belongs to the hainantoxin family. 17 subfamily. As to expression, expressed by the venom gland.

The protein localises to the secreted. Functionally, putative ion channel inhibitor. The sequence is that of Hainantoxin-XVII from Cyriopagopus hainanus (Chinese bird spider).